Here is a 227-residue protein sequence, read N- to C-terminus: ATP-dependent dethiobiotin synthetase BioD (227 aa).

13-18 lines the ATP pocket; the sequence is DIGKTY. Residue Thr-17 participates in Mg(2+) binding. The active site involves Lys-38. Substrate is bound at residue Ser-42. ATP is bound by residues Asp-55, 116–119, and 179–180; these read EGSG and NN. 2 residues coordinate Mg(2+): Asp-55 and Glu-116.

Belongs to the dethiobiotin synthetase family. As to quaternary structure, homodimer. Mg(2+) is required as a cofactor.

The protein resides in the cytoplasm. It catalyses the reaction (7R,8S)-7,8-diammoniononanoate + CO2 + ATP = (4R,5S)-dethiobiotin + ADP + phosphate + 3 H(+). The protein operates within cofactor biosynthesis; biotin biosynthesis; biotin from 7,8-diaminononanoate: step 1/2. In terms of biological role, catalyzes a mechanistically unusual reaction, the ATP-dependent insertion of CO2 between the N7 and N8 nitrogen atoms of 7,8-diaminopelargonic acid (DAPA, also called 7,8-diammoniononanoate) to form a ureido ring. The chain is ATP-dependent dethiobiotin synthetase BioD from Clostridium botulinum (strain Eklund 17B / Type B).